The following is a 32-amino-acid chain: Cytochrome b6-f complex subunit 7 (32 aa).

The helical transmembrane segment at 9-27 (AVVFWVLIPVGLAGGALLL) threads the bilayer.

This sequence belongs to the PetM family. As to quaternary structure, the 4 large subunits of the cytochrome b6-f complex are cytochrome b6, subunit IV (17 kDa polypeptide, PetD), cytochrome f and the Rieske protein, while the 4 small subunits are PetG, PetL, PetM and PetN. The complex functions as a dimer.

The protein localises to the cellular thylakoid membrane. Its function is as follows. Component of the cytochrome b6-f complex, which mediates electron transfer between photosystem II (PSII) and photosystem I (PSI), cyclic electron flow around PSI, and state transitions. The protein is Cytochrome b6-f complex subunit 7 of Synechococcus sp. (strain CC9311).